An 87-amino-acid chain; its full sequence is Large ribosomal subunit protein eL31 (87 aa).

The protein belongs to the eukaryotic ribosomal protein eL31 family.

This chain is Large ribosomal subunit protein eL31, found in Methanocorpusculum labreanum (strain ATCC 43576 / DSM 4855 / Z).